The following is a 268-amino-acid chain: Hydroxyethylthiazole kinase (268 aa).

Met-47 contributes to the substrate binding site. ATP contacts are provided by Lys-123 and Thr-170. Ala-196 lines the substrate pocket.

The protein belongs to the Thz kinase family. The cofactor is Mg(2+).

It carries out the reaction 5-(2-hydroxyethyl)-4-methylthiazole + ATP = 4-methyl-5-(2-phosphooxyethyl)-thiazole + ADP + H(+). Its pathway is cofactor biosynthesis; thiamine diphosphate biosynthesis; 4-methyl-5-(2-phosphoethyl)-thiazole from 5-(2-hydroxyethyl)-4-methylthiazole: step 1/1. Its function is as follows. Catalyzes the phosphorylation of the hydroxyl group of 4-methyl-5-beta-hydroxyethylthiazole (THZ). The polypeptide is Hydroxyethylthiazole kinase (Finegoldia magna (strain ATCC 29328 / DSM 20472 / WAL 2508) (Peptostreptococcus magnus)).